The chain runs to 79 residues: Major outer membrane lipoprotein Lpp 3 (79 aa).

The signal sequence occupies residues 1–21 (MNRTNKLILGAVVLGSALLAG). Cys22 carries N-palmitoyl cysteine lipidation. Residue Cys22 is the site of S-diacylglycerol cysteine attachment. 2 consecutive repeats follow at residues 25 to 35 (NAKIDQLSSDV) and 39 to 49 (SAKVDQLSNDV). The stretch at 28–76 (IDQLSSDVQTLSAKVDQLSNDVNAMRSDVQAAKDDAARANQRLDNKVLR) forms a coiled coil. Lys79 is modified (N6-murein peptidoglycan lysine).

This sequence belongs to the Lpp family. In terms of assembly, homotrimer.

The protein localises to the cell outer membrane. The protein resides in the secreted. It is found in the cell wall. In terms of biological role, a highly abundant outer membrane lipoprotein that controls the distance between the inner and outer membranes. The only protein known to be covalently linked to the peptidoglycan network (PGN). Also non-covalently binds the PGN. The link between the cell outer membrane and PGN contributes to maintenance of the structural and functional integrity of the cell envelope, and maintains the correct distance between the PGN and the outer membrane. The polypeptide is Major outer membrane lipoprotein Lpp 3 (Salmonella paratyphi A (strain ATCC 9150 / SARB42)).